A 154-amino-acid chain; its full sequence is MPFLLNNFKFSRFRSFATKLEKTKGFFNYQPLTKFKQKYSLDVAYVYIISSYNNTLISLTDFLGNVLKNESCGSCNYKGRFKRKFIASKQAAENIVSFCKFQRIKRLVIILHGYGKGSEMVIRTIREKELKILDIKIKDKKPYNGCRQKKKRRI.

It belongs to the universal ribosomal protein uS11 family. Part of the 30S ribosomal subunit.

It is found in the plastid. This Helicosporidium sp. subsp. Simulium jonesii (Green alga) protein is Small ribosomal subunit protein uS11c.